We begin with the raw amino-acid sequence, 361 residues long: Divinyl chlorophyll a/b light-harvesting protein PcbE (361 aa).

Transmembrane regions (helical) follow at residues 27–47 (FIGSHVAHTGLIAFTAGANTL), 88–108 (VAFVGIFHLICSFVYALAGLL), 149–169 (FILGHHLVFFGVANIWFVEWA), 210–230 (VMGGHAFLAFFQIGGGAFHIA), 250–270 (AVLSWSLAGIGWMAIIAAFWC), and 315–335 (LSNVHYYLGFFFIQGHLWHAI).

It belongs to the PsbB/PsbC family. IsiA/Pcb subfamily. In terms of assembly, the antenna complex consists of divinyl chlorophylls (a and b) and divinyl chlorophyll a/b binding proteins and binds more divinyl chlorophyll b than does the antenna complex from high-light-adapted Prochlorococcus. Divinyl chlorophyll a is required as a cofactor. Requires divinyl chlorophyll b as cofactor.

The protein resides in the cellular thylakoid membrane. In terms of biological role, the antenna complex functions as a light receptor, it captures and delivers excitation energy to photosystems II and I. The Prochlorales pcb genes are not related to higher plant LHCs. This Prochlorococcus marinus (strain SARG / CCMP1375 / SS120) protein is Divinyl chlorophyll a/b light-harvesting protein PcbE (pcbE).